The sequence spans 267 residues: Putative F-box protein At1g61060 (267 aa).

An F-box domain is found at 15–63 (DYFDAIHVDLFTAKILSKLPVKSIAQCRCVSKLWSSQIRRPYYNMLFPI).

In Arabidopsis thaliana (Mouse-ear cress), this protein is Putative F-box protein At1g61060.